An 814-amino-acid polypeptide reads, in one-letter code: Protein ADP-ribosyltransferase PARP3 (814 aa).

2 stretches are compositionally biased toward basic and acidic residues: residues 1 to 19 (MKVH…EQKG) and 27 to 48 (EGKL…DDGR). Residues 1 to 52 (MKVHETRSHAHMSGDEQKGNLRKHKAEGKLPESEQSQKKAKPENDDGRSVNG) form a disordered region. Residues 38-186 (KKAKPENDDG…KRELGSADKP (149 aa)) enclose the PADR1 zinc-binding domain. The zinc ribbon stretch occupies residues 105 to 150 (GALAKCPLCGGTLICDNEKRFVCGGEISEWCSCVFSTKDPPRKEEP). 4 residues coordinate Zn(2+): Cys110, Cys113, Cys127, and Cys137. 2 TPR repeats span residues 182-215 (SADK…NGGK) and 277-310 (DLSV…YGKR). Residues 187-274 (FVGMMISLMG…EAQPLEAYDV (88 aa)) enclose the BRCT domain. One can recognise a WGR domain in the interval 322 to 422 (GGKIFEKDGL…KKIQKKPHKF (101 aa)). Positions 449-568 (HCKLDSFVAN…DINTASRLIG (120 aa)) constitute a PARP alpha-helical domain. Positions 577–808 (DPLSDRYKKL…VKYEEKGTEI (232 aa)) constitute a PARP catalytic domain.

This sequence belongs to the ARTD/PARP family.

It is found in the nucleus. The enzyme catalyses L-aspartyl-[protein] + NAD(+) = 4-O-(ADP-D-ribosyl)-L-aspartyl-[protein] + nicotinamide. It catalyses the reaction L-glutamyl-[protein] + NAD(+) = 5-O-(ADP-D-ribosyl)-L-glutamyl-[protein] + nicotinamide. Involved in the base excision repair (BER) pathway, by catalyzing the poly(ADP-ribosyl)ation of a limited number of acceptor proteins involved in chromatin architecture and in DNA metabolism. This modification follows DNA damages and appears as an obligatory step in a detection/signaling pathway leading to the reparation of DNA strand breaks. The polypeptide is Protein ADP-ribosyltransferase PARP3 (PARP3) (Arabidopsis thaliana (Mouse-ear cress)).